The sequence spans 617 residues: Proline--tRNA ligase (617 aa).

The protein belongs to the class-II aminoacyl-tRNA synthetase family. ProS type 1 subfamily. In terms of assembly, homodimer.

The protein resides in the cytoplasm. It carries out the reaction tRNA(Pro) + L-proline + ATP = L-prolyl-tRNA(Pro) + AMP + diphosphate. In terms of biological role, catalyzes the attachment of proline to tRNA(Pro) in a two-step reaction: proline is first activated by ATP to form Pro-AMP and then transferred to the acceptor end of tRNA(Pro). As ProRS can inadvertently accommodate and process non-cognate amino acids such as alanine and cysteine, to avoid such errors it has two additional distinct editing activities against alanine. One activity is designated as 'pretransfer' editing and involves the tRNA(Pro)-independent hydrolysis of activated Ala-AMP. The other activity is designated 'posttransfer' editing and involves deacylation of mischarged Ala-tRNA(Pro). The misacylated Cys-tRNA(Pro) is not edited by ProRS. This chain is Proline--tRNA ligase, found in Streptococcus pneumoniae (strain ATCC 700669 / Spain 23F-1).